Here is a 322-residue protein sequence, read N- to C-terminus: ATP-dependent 6-phosphofructokinase (322 aa).

Residue glycine 11 participates in ATP binding. 21-25 (RAVVR) contacts ADP. ATP contacts are provided by residues 72–73 (RC) and 102–105 (GDGS). Aspartate 103 contributes to the Mg(2+) binding site. 127 to 129 (TID) serves as a coordination point for substrate. The active-site Proton acceptor is aspartate 129. Arginine 156 serves as a coordination point for ADP. Residues arginine 164 and 171–173 (MGR) contribute to the substrate site. ADP is bound by residues 187–189 (GAE), arginine 213, and 215–217 (KKH). Substrate is bound by residues glutamate 224, arginine 245, and 251 to 254 (HVQR).

It belongs to the phosphofructokinase type A (PFKA) family. ATP-dependent PFK group I subfamily. Prokaryotic clade 'B1' sub-subfamily. As to quaternary structure, homotetramer. It depends on Mg(2+) as a cofactor.

The protein localises to the cytoplasm. The catalysed reaction is beta-D-fructose 6-phosphate + ATP = beta-D-fructose 1,6-bisphosphate + ADP + H(+). It functions in the pathway carbohydrate degradation; glycolysis; D-glyceraldehyde 3-phosphate and glycerone phosphate from D-glucose: step 3/4. With respect to regulation, allosterically activated by ADP and other diphosphonucleosides, and allosterically inhibited by phosphoenolpyruvate. In terms of biological role, catalyzes the phosphorylation of D-fructose 6-phosphate to fructose 1,6-bisphosphate by ATP, the first committing step of glycolysis. The polypeptide is ATP-dependent 6-phosphofructokinase (Staphylococcus aureus (strain MRSA252)).